The sequence spans 502 residues: TNF receptor-associated factor family protein DDB_G0268444 (502 aa).

The RING-type; degenerate zinc-finger motif lies at 28–68; the sequence is CSICYESVYKKEIYQCKEIHWFCKTCWAESLFKKKECMICR. 2 TRAF-type zinc fingers span residues 129 to 183 and 185 to 243; these read KHLK…SRSL and NHYK…PKSN. Residues 261-295 are a coiled coil; sequence IESQSLQIKETNIKYENLLNKINKLEQLETESKCD. The region spanning 368 to 489 is the MATH domain; it reads KYKNRWSISN…DDSLVIDFSI (122 aa).

It belongs to the TNF receptor-associated factor family. A subfamily.

Its subcellular location is the cytoplasm. Functionally, probable adapter protein and signal transducer that links members of the tumor necrosis factor receptor family to different signaling pathways by association with the receptor cytoplasmic domain and kinases. The polypeptide is TNF receptor-associated factor family protein DDB_G0268444 (Dictyostelium discoideum (Social amoeba)).